Consider the following 294-residue polypeptide: Acetyl-coenzyme A carboxylase carboxyl transferase subunit beta (294 aa).

One can recognise a CoA carboxyltransferase N-terminal domain in the interval 30–294 (IMTKCPECKK…PEVGGEADGE (265 aa)). 4 residues coordinate Zn(2+): Cys-34, Cys-37, Cys-53, and Cys-56. A C4-type zinc finger spans residues 34–56 (CPECKKIMYTKELQKNLMVCNYC).

This sequence belongs to the AccD/PCCB family. In terms of assembly, acetyl-CoA carboxylase is a heterohexamer composed of biotin carboxyl carrier protein (AccB), biotin carboxylase (AccC) and two subunits each of ACCase subunit alpha (AccA) and ACCase subunit beta (AccD). It depends on Zn(2+) as a cofactor.

The protein localises to the cytoplasm. The enzyme catalyses N(6)-carboxybiotinyl-L-lysyl-[protein] + acetyl-CoA = N(6)-biotinyl-L-lysyl-[protein] + malonyl-CoA. Its pathway is lipid metabolism; malonyl-CoA biosynthesis; malonyl-CoA from acetyl-CoA: step 1/1. In terms of biological role, component of the acetyl coenzyme A carboxylase (ACC) complex. Biotin carboxylase (BC) catalyzes the carboxylation of biotin on its carrier protein (BCCP) and then the CO(2) group is transferred by the transcarboxylase to acetyl-CoA to form malonyl-CoA. This Listeria monocytogenes serotype 4b (strain F2365) protein is Acetyl-coenzyme A carboxylase carboxyl transferase subunit beta.